The chain runs to 528 residues: ADP,ATP carrier protein 1 (528 aa).

Helical transmembrane passes span 24–44, 63–83, 93–113, 124–144, 149–169, 184–204, 220–240, 284–304, 327–347, 356–376, 381–401, and 463–483; these read LKKV…YTIL, IPFI…LIYA, ALFF…PVVI, AFAD…IAML, FAVF…LMFW, FYAL…PAII, WGVS…IIAA, YMLL…LVEV, FSFW…GNVI, ALVT…LVIF, TGLV…VGAI, and IGAM…VWLT.

This sequence belongs to the ADP/ATP translocase tlc family.

The protein localises to the cell membrane. The polypeptide is ADP,ATP carrier protein 1 (tlcA) (Chlamydia trachomatis serovar D (strain ATCC VR-885 / DSM 19411 / UW-3/Cx)).